A 503-amino-acid chain; its full sequence is Lanosterol 14-alpha demethylase (503 aa).

Residues 24 to 44 (GNLLSTLLIACAFTLSLVYLF) form a helical membrane-spanning segment. Position 449 (Cys-449) interacts with heme.

It belongs to the cytochrome P450 family. Heme is required as a cofactor. Ubiquitinated by MARCHF6, leading to proteasomal degradation.

It localises to the endoplasmic reticulum membrane. The protein localises to the microsome membrane. The catalysed reaction is a 14alpha-methyl steroid + 3 reduced [NADPH--hemoprotein reductase] + 3 O2 = a Delta(14) steroid + formate + 3 oxidized [NADPH--hemoprotein reductase] + 4 H2O + 4 H(+). It catalyses the reaction lanosterol + 3 reduced [NADPH--hemoprotein reductase] + 3 O2 = 4,4-dimethyl-5alpha-cholesta-8,14,24-trien-3beta-ol + formate + 3 oxidized [NADPH--hemoprotein reductase] + 4 H2O + 4 H(+). It carries out the reaction 24,25-dihydrolanosterol + 3 reduced [NADPH--hemoprotein reductase] + 3 O2 = 4,4-dimethyl-8,14-cholestadien-3beta-ol + formate + 3 oxidized [NADPH--hemoprotein reductase] + 4 H2O + 4 H(+). The enzyme catalyses a 14alpha-methyl steroid + reduced [NADPH--hemoprotein reductase] + O2 = a 14alpha-hydroxymethyl steroid + oxidized [NADPH--hemoprotein reductase] + H2O + H(+). The catalysed reaction is a 14alpha-hydroxymethyl steroid + reduced [NADPH--hemoprotein reductase] + O2 = a 14alpha-formyl steroid + oxidized [NADPH--hemoprotein reductase] + 2 H2O + H(+). It catalyses the reaction a 14alpha-formyl steroid + reduced [NADPH--hemoprotein reductase] + O2 = a Delta(14) steroid + formate + oxidized [NADPH--hemoprotein reductase] + H2O + 2 H(+). It carries out the reaction lanosterol + reduced [NADPH--hemoprotein reductase] + O2 = 32-hydroxylanosterol + oxidized [NADPH--hemoprotein reductase] + H2O + H(+). The enzyme catalyses 32-hydroxylanosterol + reduced [NADPH--hemoprotein reductase] + O2 = 32-oxolanosterol + oxidized [NADPH--hemoprotein reductase] + 2 H2O + H(+). The catalysed reaction is 32-oxolanosterol + reduced [NADPH--hemoprotein reductase] + O2 = 4,4-dimethyl-5alpha-cholesta-8,14,24-trien-3beta-ol + formate + oxidized [NADPH--hemoprotein reductase] + H2O + 2 H(+). It catalyses the reaction 24,25-dihydrolanosterol + reduced [NADPH--hemoprotein reductase] + O2 = 32-hydroxy-24,25-dihydrolanosterol + oxidized [NADPH--hemoprotein reductase] + H2O + H(+). It carries out the reaction 32-hydroxy-24,25-dihydrolanosterol + reduced [NADPH--hemoprotein reductase] + O2 = 32-oxo-24,25-dihydrolanosterol + oxidized [NADPH--hemoprotein reductase] + 2 H2O + H(+). The enzyme catalyses 32-oxo-24,25-dihydrolanosterol + reduced [NADPH--hemoprotein reductase] + O2 = 4,4-dimethyl-8,14-cholestadien-3beta-ol + formate + oxidized [NADPH--hemoprotein reductase] + H2O + 2 H(+). Its pathway is steroid biosynthesis; zymosterol biosynthesis; zymosterol from lanosterol: step 1/6. With respect to regulation, inhibited by azalanstat. Inhibited by azole antifungal agents ketoconazole, itraconazole and fluconazole. In terms of biological role, sterol 14alpha-demethylase that plays a critical role in the cholesterol biosynthesis pathway, being cholesterol the major sterol component in mammalian membranes as well as a precursor for bile acid and steroid hormone synthesis. Cytochrome P450 monooxygenase that catalyzes the three-step oxidative removal of the 14alpha-methyl group (C-32) of sterols such as lanosterol (lanosta-8,24-dien-3beta-ol) and 24,25-dihydrolanosterol (DHL) in the form of formate, and converts the sterols to 4,4-dimethyl-5alpha-cholesta-8,14,24-trien-3beta-ol and 4,4-dimethyl-8,14-cholestadien-3beta-ol, respectively, which are intermediates of cholesterol biosynthesis. Can also demethylate substrates not intrinsic to mammals, such as eburicol (24-methylene-24,25-dihydrolanosterol), but at a lower rate than DHL. The protein is Lanosterol 14-alpha demethylase of Rattus norvegicus (Rat).